Here is a 490-residue protein sequence, read N- to C-terminus: Cobyric acid synthase (490 aa).

In terms of domain architecture, GATase cobBQ-type spans R252–A439. The active-site Nucleophile is the C333. H431 is an active-site residue.

This sequence belongs to the CobB/CobQ family. CobQ subfamily.

It functions in the pathway cofactor biosynthesis; adenosylcobalamin biosynthesis. Its function is as follows. Catalyzes amidations at positions B, D, E, and G on adenosylcobyrinic A,C-diamide. NH(2) groups are provided by glutamine, and one molecule of ATP is hydrogenolyzed for each amidation. The polypeptide is Cobyric acid synthase (Pseudomonas aeruginosa (strain LESB58)).